The sequence spans 1845 residues: Histone-lysine N-methyltransferase, H3 lysine-79 specific (1845 aa).

A compositionally biased stretch (polar residues) spans 1–44 (MSTNSTPRKQKLSNSKSLQNSPISPTVKKTNSFPLGNNIPTNIN). Disordered stretches follow at residues 1 to 67 (MSTN…NGIG), 83 to 306 (PPLP…NKWT), 450 to 470 (SHDI…NKNK), 486 to 571 (QKLK…TERK), 585 to 681 (RKER…NDSY), 741 to 767 (GETF…KKIE), 862 to 881 (QTTK…AETE), and 963 to 1102 (KDNP…SNSL). Composition is skewed to low complexity over residues 52–67 (NNSN…NGIG), 90–162 (SSSS…QQEP), 191–226 (PSTP…SNNS), and 239–263 (NNNN…NNNN). Residues 268–280 (VIDDDDDDDDDEG) show a composition bias toward acidic residues. Residues 282–294 (SIKSTHTSTQSTP) are compositionally biased toward polar residues. The segment covering 295-304 (IRDRRQRDNK) has biased composition (basic and acidic residues). Over residues 453–464 (INNNNNNNNNNK) the composition is skewed to low complexity. Residues 585-679 (RKERERKERK…IEKERREKND (95 aa)) show a composition bias toward basic and acidic residues. Residues 625-639 (KKKEKEKEKEKEKEK) form a required for interaction with nucleosomes and DNA region. Low complexity-rich tracts occupy residues 750–763 (NNNN…NNNN), 862–877 (QTTK…TTTT), 972–1011 (NNNR…RNNN), and 1020–1067 (NNNN…NNTI). The segment covering 1069–1080 (KKIETIKKDINK) has biased composition (basic and acidic residues). Over residues 1084–1102 (KTTTTTSSSSSSTSSSNSL) the composition is skewed to low complexity. Residues 1125-1446 (FDVGIGVPVT…KDSDIVTDQT (322 aa)) form the DOT1 domain. Residues 1251–1254 (YGEA), 1274–1283 (FCDIGCGIGN), and E1300 contribute to the S-adenosyl-L-methionine site. 5 disordered regions span residues 1463–1559 (LQLF…NKPI), 1610–1661 (RISP…SSND), 1735–1762 (HQKS…KKEQ), 1772–1791 (NYNN…NHNN), and 1799–1845 (TDLI…DNNK). Composition is skewed to low complexity over residues 1467 to 1522 (SSSS…TPNS), 1541 to 1556 (NNNN…NSNN), and 1610 to 1642 (RISP…SSSD). Positions 1643–1656 (NENDDDNGDDEDDS) are enriched in acidic residues. Basic residues predominate over residues 1745–1759 (RLSRKQKKLAKKNKK). Composition is skewed to low complexity over residues 1799 to 1817 (TDLI…INND) and 1835 to 1845 (KDYNNINDNNK).

The protein belongs to the class I-like SAM-binding methyltransferase superfamily. DOT1 family.

The protein localises to the nucleus. It carries out the reaction L-lysyl(79)-[histone H3] + 3 S-adenosyl-L-methionine = N(6),N(6),N(6)-trimethyl-L-lysyl(79)-[histone H3] + 3 S-adenosyl-L-homocysteine + 3 H(+). Functionally, histone methyltransferase that specifically methylates histone H3 to form H3K79me. This methylation is required for telomere silencing, correct growth and development, and for resistance to DNA damage induced by UV LIGHT. This chain is Histone-lysine N-methyltransferase, H3 lysine-79 specific, found in Dictyostelium discoideum (Social amoeba).